The sequence spans 144 residues: Single-stranded DNA-binding protein 3 (144 aa).

An SSB domain is found at 1 to 103; the sequence is MNKVVLIGRL…IVAEEVQFLE (103 aa). The segment covering 112–134 has biased composition (polar residues); sequence MANDQFNNGNENGSMQLPDNNDI. The disordered stretch occupies residues 112 to 144; sequence MANDQFNNGNENGSMQLPDNNDITPIDDGDIPF.

As to quaternary structure, homotetramer.

This Clostridium acetobutylicum (strain ATCC 824 / DSM 792 / JCM 1419 / IAM 19013 / LMG 5710 / NBRC 13948 / NRRL B-527 / VKM B-1787 / 2291 / W) protein is Single-stranded DNA-binding protein 3 (ssb3).